The chain runs to 369 residues: ATP-dependent (S)-NAD(P)H-hydrate dehydratase (369 aa).

The 343-residue stretch at 14–356 (LFQKARKLVP…DEVHESFLTL (343 aa)) folds into the YjeF C-terminal domain. (6S)-NADPHX contacts are provided by residues G126 and 179–185 (NVNEFSR). ATP-binding positions include 231 to 235 (KGPHD) and 250 to 259 (GGLKRSGGQG). D260 is a (6S)-NADPHX binding site. Positions 284 to 306 (GEQEHSKEAENKEEVQGELESNK) are enriched in basic and acidic residues. The disordered stretch occupies residues 284–307 (GEQEHSKEAENKEEVQGELESNKR).

This sequence belongs to the NnrD/CARKD family. Mg(2+) is required as a cofactor.

The protein resides in the cytoplasm. It carries out the reaction (6S)-NADHX + ATP = ADP + phosphate + NADH + H(+). The enzyme catalyses (6S)-NADPHX + ATP = ADP + phosphate + NADPH + H(+). Its function is as follows. Catalyzes the dehydration of the S-form of NAD(P)HX at the expense of ATP, which is converted to ADP. Together with NAD(P)HX epimerase, which catalyzes the epimerization of the S- and R-forms, the enzyme allows the repair of both epimers of NAD(P)HX, a damaged form of NAD(P)H that is a result of enzymatic or heat-dependent hydration. The sequence is that of ATP-dependent (S)-NAD(P)H-hydrate dehydratase from Emericella nidulans (strain FGSC A4 / ATCC 38163 / CBS 112.46 / NRRL 194 / M139) (Aspergillus nidulans).